Here is a 399-residue protein sequence, read N- to C-terminus: Bombesin receptor subtype-3 (399 aa).

Residues 1 to 41 are Extracellular-facing; it reads MSQKQPQSPNQTLISITNDTESSSSVVSNDTTNKGWTGDNS. 2 N-linked (GlcNAc...) asparagine glycosylation sites follow: N10 and N18. The helical transmembrane segment at 42–63 threads the bilayer; sequence PGIEALCAIYITYAVIISVGIL. Over 64–82 the chain is Cytoplasmic; that stretch reads GNAILIKVFFKTKSMQTVP. The helical transmembrane segment at 83 to 103 threads the bilayer; that stretch reads NIFITSLALGDLLLLLTCVPV. The Extracellular segment spans residues 104 to 121; the sequence is DATHYLAEGWLFGRIGCK. The cysteines at positions 120 and 203 are disulfide-linked. Residues 122–143 form a helical membrane-spanning segment; that stretch reads VLSFIRLTSVGVSVFTLTILSA. Residues 144-163 are Cytoplasmic-facing; sequence DRYKAVVKPLERQPSNAILK. Residues 164 to 184 traverse the membrane as a helical segment; that stretch reads TCAKAGCIWIMSMIFALPEAI. Residues 185–220 lie on the Extracellular side of the membrane; it reads FSNVHTLRDPNKNMTSEWCAFYPVSEKLLQEIHALL. Residues 221 to 241 traverse the membrane as a helical segment; it reads SFLVFYIIPLSIISVYYSLIA. The Cytoplasmic segment spans residues 242–272; that stretch reads RTLYKSTLNIPTEEQSHARKQVESRKRIAKT. Residues 273 to 293 traverse the membrane as a helical segment; that stretch reads VLVLVALFALCWLPNHLLNLY. At 294 to 313 the chain is on the extracellular side; that stretch reads HSFTHKAYEDSSAIHFIVTI. Residues 314 to 333 traverse the membrane as a helical segment; sequence FSRVLAFSNSCVNPFALYWL. Topologically, residues 334–399 are cytoplasmic; it reads SKTFQKQFKA…RPMKKEENRV (66 aa). C347 carries S-palmitoyl cysteine lipidation.

Belongs to the G-protein coupled receptor 1 family. As to quaternary structure, interacts with C6orf89. In terms of tissue distribution, mainly in uteri of pregnant animals.

Its subcellular location is the cell membrane. Its function is as follows. Role in sperm cell division, maturation, or function. The relative order of ligand affinity is GRP = neuromedin-C &gt;&gt; neuromedin-B. This receptor mediates its action by association with G proteins that activate a phosphatidylinositol-calcium second messenger system. The sequence is that of Bombesin receptor subtype-3 (BRS3) from Cavia porcellus (Guinea pig).